Consider the following 497-residue polypeptide: Glycerol kinase (497 aa).

T12 contacts ADP. Positions 12, 13, and 14 each coordinate ATP. Sn-glycerol 3-phosphate is bound at residue T12. R16 is an ADP binding site. Residues R82, E83, Y134, and D243 each coordinate sn-glycerol 3-phosphate. Residues R82, E83, Y134, D243, and Q244 each coordinate glycerol. Residues T265 and G308 each coordinate ADP. The ATP site is built by T265, G308, Q312, and G409. Positions 409 and 413 each coordinate ADP.

Belongs to the FGGY kinase family. Homotetramer and homodimer (in equilibrium).

It catalyses the reaction glycerol + ATP = sn-glycerol 3-phosphate + ADP + H(+). The protein operates within polyol metabolism; glycerol degradation via glycerol kinase pathway; sn-glycerol 3-phosphate from glycerol: step 1/1. Activated by phosphorylation and inhibited by fructose 1,6-bisphosphate (FBP). Key enzyme in the regulation of glycerol uptake and metabolism. Catalyzes the phosphorylation of glycerol to yield sn-glycerol 3-phosphate. The polypeptide is Glycerol kinase (Caldanaerobacter subterraneus subsp. tengcongensis (strain DSM 15242 / JCM 11007 / NBRC 100824 / MB4) (Thermoanaerobacter tengcongensis)).